The sequence spans 331 residues: Putative peptidyl-prolyl cis-trans isomerase RF_0616 (331 aa).

The disordered stretch occupies residues asparagine 28–asparagine 50. A PPIase FKBP-type domain is found at glycine 128–glutamate 226.

It catalyses the reaction [protein]-peptidylproline (omega=180) = [protein]-peptidylproline (omega=0). The polypeptide is Putative peptidyl-prolyl cis-trans isomerase RF_0616 (Rickettsia felis (strain ATCC VR-1525 / URRWXCal2) (Rickettsia azadi)).